Reading from the N-terminus, the 387-residue chain is Phosphoglycerate kinase (387 aa).

Substrate-binding positions include 21 to 23, R36, 59 to 62, R113, and R146; these read DLN and HLGR. Residues K197, E314, and 340–343 contribute to the ATP site; that span reads GGDT.

It belongs to the phosphoglycerate kinase family. In terms of assembly, monomer.

It localises to the cytoplasm. It catalyses the reaction (2R)-3-phosphoglycerate + ATP = (2R)-3-phospho-glyceroyl phosphate + ADP. It functions in the pathway carbohydrate degradation; glycolysis; pyruvate from D-glyceraldehyde 3-phosphate: step 2/5. This chain is Phosphoglycerate kinase, found in Pectobacterium atrosepticum (strain SCRI 1043 / ATCC BAA-672) (Erwinia carotovora subsp. atroseptica).